The chain runs to 351 residues: Probable V-type proton ATPase subunit d (351 aa).

Belongs to the V-ATPase V0D/AC39 subunit family. V-ATPase is a heteromultimeric enzyme composed of a peripheral catalytic V1 complex (components A to H) attached to an integral membrane V0 proton pore complex (components: a, c, c', c'' and d).

In terms of biological role, subunit of the integral membrane V0 complex of vacuolar ATPase. Vacuolar ATPase is responsible for acidifying a variety of intracellular compartments in eukaryotic cells, thus providing most of the energy required for transport processes in the vacuolar system. The polypeptide is Probable V-type proton ATPase subunit d (Oryza sativa subsp. japonica (Rice)).